The chain runs to 441 residues: 3-phosphoshikimate 1-carboxyvinyltransferase (441 aa).

The span at 1–10 (MSVTSTASSS) shows a compositional bias: polar residues. A disordered region spans residues 1 to 21 (MSVTSTASSSRELRAGGGLSG). 3-phosphoshikimate is bound by residues Lys-29, Ser-30, and Arg-34. Phosphoenolpyruvate is bound at residue Lys-29. Phosphoenolpyruvate contacts are provided by Gly-103 and Arg-132. 3-phosphoshikimate contacts are provided by Ser-177, Gln-179, Asp-328, and Lys-355. Residue Gln-179 coordinates phosphoenolpyruvate. Asp-328 (proton acceptor) is an active-site residue. 2 residues coordinate phosphoenolpyruvate: Arg-359 and Arg-401.

It belongs to the EPSP synthase family. Monomer.

The protein localises to the cytoplasm. The catalysed reaction is 3-phosphoshikimate + phosphoenolpyruvate = 5-O-(1-carboxyvinyl)-3-phosphoshikimate + phosphate. Its pathway is metabolic intermediate biosynthesis; chorismate biosynthesis; chorismate from D-erythrose 4-phosphate and phosphoenolpyruvate: step 6/7. Its function is as follows. Catalyzes the transfer of the enolpyruvyl moiety of phosphoenolpyruvate (PEP) to the 5-hydroxyl of shikimate-3-phosphate (S3P) to produce enolpyruvyl shikimate-3-phosphate and inorganic phosphate. This Prochlorococcus marinus (strain MIT 9303) protein is 3-phosphoshikimate 1-carboxyvinyltransferase.